A 503-amino-acid polypeptide reads, in one-letter code: Probable cytosol aminopeptidase (503 aa).

Mn(2+) contacts are provided by Lys274 and Asp279. The active site involves Lys286. Positions 297, 356, and 358 each coordinate Mn(2+). The active site involves Arg360.

The protein belongs to the peptidase M17 family. The cofactor is Mn(2+).

The protein resides in the cytoplasm. It carries out the reaction Release of an N-terminal amino acid, Xaa-|-Yaa-, in which Xaa is preferably Leu, but may be other amino acids including Pro although not Arg or Lys, and Yaa may be Pro. Amino acid amides and methyl esters are also readily hydrolyzed, but rates on arylamides are exceedingly low.. The enzyme catalyses Release of an N-terminal amino acid, preferentially leucine, but not glutamic or aspartic acids.. Presumably involved in the processing and regular turnover of intracellular proteins. Catalyzes the removal of unsubstituted N-terminal amino acids from various peptides. In Burkholderia ambifaria (strain ATCC BAA-244 / DSM 16087 / CCUG 44356 / LMG 19182 / AMMD) (Burkholderia cepacia (strain AMMD)), this protein is Probable cytosol aminopeptidase.